A 30-amino-acid polypeptide reads, in one-letter code: Cycloviolacin-H3 (30 aa).

Positions Gly-1–Asn-30 form a cross-link, cyclopeptide (Gly-Asn). Intrachain disulfides connect Cys-5–Cys-19, Cys-9–Cys-21, and Cys-14–Cys-27.

This is a cyclic peptide.

Probably participates in a plant defense mechanism. The chain is Cycloviolacin-H3 from Viola hederacea (Australian violet).